Here is a 301-residue protein sequence, read N- to C-terminus: Troponin T, cardiac muscle (301 aa).

Composition is skewed to acidic residues over residues 1 to 42 (MSDL…EEEA) and 50 to 74 (AETEETQAEEDGQEEEDKEDEDGPV). 2 disordered regions span residues 1 to 99 (MSDL…GERV) and 125 to 223 (ENRK…KKKK). Serine 2 carries the post-translational modification N-acetylserine. Serine 2 carries the phosphoserine; by CK2 modification. The span at 82-93 (RPFMPNLVPPKI) shows a compositional bias: pro residues. 2 stretches are compositionally biased toward basic and acidic residues: residues 125–186 (ENRK…DEAR) and 206–223 (QTERKSGKRQTEREKKKK). Phosphothreonine; by PKC/PRKCA is present on threonine 207. Serine 211 carries the phosphoserine; by PKC/PRKCA modification. Threonine 216 carries the phosphothreonine; by PKC/PRKCA and RAF1 modification. Threonine 297 carries the post-translational modification Phosphothreonine; by PKC/PRKCA.

The protein belongs to the troponin T family. As to quaternary structure, binds with troponins I and C to make the thin-filament regulatory complex, troponin. Phosphorylation at Thr-216 by PRKCA induces significant reduction in myofilament calcium sensitivity and actomyosin ATPase activity. As to expression, the major isoform in adult heart is CTNT4.

Functionally, troponin T is the tropomyosin-binding subunit of troponin, the thin filament regulatory complex which confers calcium-sensitivity to striated muscle actomyosin ATPase activity. The sequence is that of Troponin T, cardiac muscle (TNNT2) from Oryctolagus cuniculus (Rabbit).